The following is a 417-amino-acid chain: NADH-quinone oxidoreductase subunit D (417 aa).

This sequence belongs to the complex I 49 kDa subunit family. NDH-1 is composed of 14 different subunits. Subunits NuoB, C, D, E, F, and G constitute the peripheral sector of the complex.

It localises to the cell inner membrane. The catalysed reaction is a quinone + NADH + 5 H(+)(in) = a quinol + NAD(+) + 4 H(+)(out). In terms of biological role, NDH-1 shuttles electrons from NADH, via FMN and iron-sulfur (Fe-S) centers, to quinones in the respiratory chain. The immediate electron acceptor for the enzyme in this species is believed to be ubiquinone. Couples the redox reaction to proton translocation (for every two electrons transferred, four hydrogen ions are translocated across the cytoplasmic membrane), and thus conserves the redox energy in a proton gradient. The sequence is that of NADH-quinone oxidoreductase subunit D from Paraburkholderia phytofirmans (strain DSM 17436 / LMG 22146 / PsJN) (Burkholderia phytofirmans).